We begin with the raw amino-acid sequence, 375 residues long: F-box/kelch-repeat protein At4g39580 (375 aa).

Residues 20–66 (PTTNLFLPDDILLSSLSRISRLYYPTFSLVSKSFRSLIASPELYQTR) form the F-box domain. Kelch repeat units lie at residues 132–178 (NIYA…VLDG), 179–225 (KIYV…KSVG), and 229–269 (KYHL…VINN).

The protein is F-box/kelch-repeat protein At4g39580 of Arabidopsis thaliana (Mouse-ear cress).